Here is a 142-residue protein sequence, read N- to C-terminus: C-type lectin 13 (142 aa).

The signal sequence occupies residues 1 to 23; it reads MGRLVFVSFGGWDVFLSLSGTGA. Intrachain disulfides connect C25/C36, C53/C138, and C115/C130. A C-type lectin domain is found at 32–139; sequence YEGHCYRVFQ…CSKTHNVVCK (108 aa).

It belongs to the snaclec family. In terms of assembly, heteromultimer; disulfide-linked. As to expression, expressed by the venom gland.

The protein resides in the secreted. Interferes with one step of hemostasis (modulation of platelet aggregation, or coagulation cascade, for example). The chain is C-type lectin 13 from Crotalus adamanteus (Eastern diamondback rattlesnake).